The chain runs to 416 residues: MDLITLGKAAKDAAFQLATASTAQKNKALAIIADELEANAADILAANSKDIELGRQAGLSEAMLDRLLLNESRLNGIANDVRNVISLTDPVGSEIDSKVLENGMQLSRRRVPLGVVGVIYEARPNVTIDIAALCLKTGNASILRGGKETFFSNMELVKVIQSALAKAGLPAASVQYIEKPDRELVTQLLKLDDYVDMIIPRGGAGLHKMCKENSTIPVIIGGFGISHIFVDETADLAKSVDVVENAKAQRPSACNALDTLLVHERIAEQFLPMLVAKLNGKVTFVVEPKAKAYMTKAEQVRDASDGDFDTEWLSYTLGVKVVADVQEAIDHMREHNASHSDAIMTNHLQNAELFINSAGSAAVYVNASTRFTDGAQFGLGAEVAVSTQKLHARGPMGLEELTSYKWVGKANYLSRA.

The protein belongs to the gamma-glutamyl phosphate reductase family.

It localises to the cytoplasm. The catalysed reaction is L-glutamate 5-semialdehyde + phosphate + NADP(+) = L-glutamyl 5-phosphate + NADPH + H(+). Its pathway is amino-acid biosynthesis; L-proline biosynthesis; L-glutamate 5-semialdehyde from L-glutamate: step 2/2. Catalyzes the NADPH-dependent reduction of L-glutamate 5-phosphate into L-glutamate 5-semialdehyde and phosphate. The product spontaneously undergoes cyclization to form 1-pyrroline-5-carboxylate. This chain is Gamma-glutamyl phosphate reductase, found in Vibrio vulnificus (strain CMCP6).